The primary structure comprises 186 residues: Peptidyl-tRNA hydrolase (186 aa).

A tRNA-binding site is contributed by Tyr-14. Residue His-19 is the Proton acceptor of the active site. Positions 65, 67, and 113 each coordinate tRNA.

It belongs to the PTH family. In terms of assembly, monomer.

The protein localises to the cytoplasm. It catalyses the reaction an N-acyl-L-alpha-aminoacyl-tRNA + H2O = an N-acyl-L-amino acid + a tRNA + H(+). Hydrolyzes ribosome-free peptidyl-tRNAs (with 1 or more amino acids incorporated), which drop off the ribosome during protein synthesis, or as a result of ribosome stalling. In terms of biological role, catalyzes the release of premature peptidyl moieties from peptidyl-tRNA molecules trapped in stalled 50S ribosomal subunits, and thus maintains levels of free tRNAs and 50S ribosomes. This chain is Peptidyl-tRNA hydrolase, found in Limosilactobacillus fermentum (strain NBRC 3956 / LMG 18251) (Lactobacillus fermentum).